The following is a 248-amino-acid chain: MADS-box transcription factor 8 (248 aa).

Residues 1 to 61 enclose the MADS-box domain; that stretch reads MGRGRVELKR…GKLYEFCSGQ (61 aa). Residues 90–180 form the K-box domain; the sequence is VQSSRNEYLK…RRKLEESNQL (91 aa).

May interact with the K-box of MADS6 and MADS16. May interact with MADS13 and MADS18. Binds to FCA. As to expression, expressed in lodicules, stamens and carpels.

Its subcellular location is the nucleus. Probable transcription factor. May be involved in the control of flowering time. The polypeptide is MADS-box transcription factor 8 (MADS8) (Oryza sativa subsp. japonica (Rice)).